A 218-amino-acid chain; its full sequence is Glutathione S-transferase Y1 (218 aa).

One can recognise a GST N-terminal domain in the interval 2–88 (PMILGYWNVR…YIARKHNLCG (87 aa)). Residues 7–8 (YW), 46–50 (WLNEK), 59–60 (NL), and 72–73 (QS) contribute to the glutathione site. One can recognise a GST C-terminal domain in the interval 90–208 (TEEERIRVDI…KTSRFLRRPI (119 aa)). Residue Y116 coordinates substrate.

Belongs to the GST superfamily. Mu family. Homodimer.

It is found in the cytoplasm. It catalyses the reaction RX + glutathione = an S-substituted glutathione + a halide anion + H(+). Its function is as follows. Conjugation of reduced glutathione to a wide number of exogenous and endogenous hydrophobic electrophiles. The chain is Glutathione S-transferase Y1 from Cricetulus longicaudatus (Long-tailed dwarf hamster).